The primary structure comprises 321 residues: Lipoyl synthase (321 aa).

[4Fe-4S] cluster is bound by residues Cys-68, Cys-73, Cys-79, Cys-94, Cys-98, Cys-101, and Ser-308. One can recognise a Radical SAM core domain in the interval 80 to 297 (FNHGTATFMI…KAEAIAMGFT (218 aa)).

Belongs to the radical SAM superfamily. Lipoyl synthase family. Requires [4Fe-4S] cluster as cofactor.

It localises to the cytoplasm. The enzyme catalyses [[Fe-S] cluster scaffold protein carrying a second [4Fe-4S](2+) cluster] + N(6)-octanoyl-L-lysyl-[protein] + 2 oxidized [2Fe-2S]-[ferredoxin] + 2 S-adenosyl-L-methionine + 4 H(+) = [[Fe-S] cluster scaffold protein] + N(6)-[(R)-dihydrolipoyl]-L-lysyl-[protein] + 4 Fe(3+) + 2 hydrogen sulfide + 2 5'-deoxyadenosine + 2 L-methionine + 2 reduced [2Fe-2S]-[ferredoxin]. It functions in the pathway protein modification; protein lipoylation via endogenous pathway; protein N(6)-(lipoyl)lysine from octanoyl-[acyl-carrier-protein]: step 2/2. In terms of biological role, catalyzes the radical-mediated insertion of two sulfur atoms into the C-6 and C-8 positions of the octanoyl moiety bound to the lipoyl domains of lipoate-dependent enzymes, thereby converting the octanoylated domains into lipoylated derivatives. The polypeptide is Lipoyl synthase (Pectobacterium carotovorum subsp. carotovorum (strain PC1)).